The chain runs to 377 residues: E3 ubiquitin-protein ligase rififylin (377 aa).

The segment at 55–107 adopts an FYVE-type zinc-finger fold; that stretch reads TGSEPSCKACGVHFASTTRKQTCLDCKKNFCMTCSSQEGNGPRLCLLCLRFRA. One can recognise an SAP 1 domain in the interval 115–134; sequence LMKMKVKDLRDYLSLHDIST. The tract at residues 176–249 is disordered; sequence LTQPQTSTVP…SVDSEDSFVP (74 aa). The span at 190 to 212 shows a compositional bias: polar residues; it reads GLPSSPAQVTSVPLAQDQETQQA. Residues 235-245 are compositionally biased toward acidic residues; that stretch reads EDETQSVDSED. Phosphoserine occurs at positions 240, 243, 246, and 254. Residues 264 to 278 form the SAP 2 domain; the sequence is IEGLTVRQLKEILAR. The segment at 330-365 adopts an RING-type zinc-finger fold; the sequence is CKICMDSPIDCVLLECGHMVTCTKCGKRMNECPICR.

Interacts with CASP8 and CASP10. Interacts with RIPK1 (via protein kinase domain); involved in RIPK1 ubiquitination. Interacts with PRR5L. Interacts (via RING-type zinc finger) with p53/TP53; involved in p53/TP53 ubiquitination. Interacts (via RING-type zinc finger) with MDM2; the interaction stabilizes MDM2. In terms of processing, autoubiquitinated. Palmitoylated. Post-translationally, undergoes caspase-mediated cleavage upon death-receptor activation, by TNFSF10 for instance. May be mediated by the caspases CASP8 and CASP10 in a negative feedback loop. Ubiquitous. Detected in heart, brain, spleen, lung, liver, skeletal muscle, kidney, testis, thymus, whole embryo and embryonic stem cells.

It localises to the cytoplasm. The protein resides in the cytosol. Its subcellular location is the cell membrane. The protein localises to the recycling endosome membrane. It carries out the reaction S-ubiquitinyl-[E2 ubiquitin-conjugating enzyme]-L-cysteine + [acceptor protein]-L-lysine = [E2 ubiquitin-conjugating enzyme]-L-cysteine + N(6)-ubiquitinyl-[acceptor protein]-L-lysine.. Its pathway is protein modification; protein ubiquitination. Its function is as follows. E3 ubiquitin-protein ligase that regulates several biological processes through the ubiquitin-mediated proteasomal degradation of various target proteins. Mediates 'Lys-48'-linked polyubiquitination of PRR5L and its subsequent proteasomal degradation thereby indirectly regulating cell migration through the mTORC2 complex. Also ubiquitinates the caspases CASP8 and CASP10, promoting their proteasomal degradation, to negatively regulate apoptosis downstream of death domain receptors. Also negatively regulates the tumor necrosis factor-mediated signaling pathway through targeting of RIPK1 to ubiquitin-mediated proteasomal degradation. Negatively regulates p53/TP53 through its direct ubiquitination and targeting to proteasomal degradation. Indirectly, may also negatively regulate p53/TP53 through ubiquitination and degradation of SFN. May also play a role in endocytic recycling. This is E3 ubiquitin-protein ligase rififylin from Mus musculus (Mouse).